The chain runs to 268 residues: MIIRPVVRSLQGRAPLATLRSAQSVFQPLPQLRRNASVTTGPDAASKASTTPIARITTTTEAPKDQKKAKAAAAAAAEPEEQEVIMSRMPRSLEALYLQPLRREAEYGVPSCDLQLRSYSIRNLEFFCDFALRAAYYLGLPAFGPVPLPRMIERWTVPKSHFIFKKSQENFERVTLRRLIQIKDGHPETVQLWLAFLQKHAYYGIGMKANVWEFSKLGVSKAMDESKSEVEKLLETRWEHLSHVSDMKGVGNFEDFLAKERLRISGGR.

A mitochondrion-targeting transit peptide spans 1–64; it reads MIIRPVVRSL…RITTTTEAPK (64 aa).

It belongs to the universal ribosomal protein uS10 family. In terms of assembly, component of the mitochondrial small ribosomal subunit (mt-SSU). Mature N.crassa 74S mitochondrial ribosomes consist of a small (37S) and a large (54S) subunit. The 37S small subunit contains a 16S ribosomal RNA (16S mt-rRNA) and 32 different proteins. The 54S large subunit contains a 23S rRNA (23S mt-rRNA) and 42 different proteins.

It localises to the mitochondrion. Functionally, component of the mitochondrial ribosome (mitoribosome), a dedicated translation machinery responsible for the synthesis of mitochondrial genome-encoded proteins, including at least some of the essential transmembrane subunits of the mitochondrial respiratory chain. The mitoribosomes are attached to the mitochondrial inner membrane and translation products are cotranslationally integrated into the membrane. The chain is Small ribosomal subunit protein uS10m (mrp-10) from Neurospora crassa (strain ATCC 24698 / 74-OR23-1A / CBS 708.71 / DSM 1257 / FGSC 987).